The following is a 153-amino-acid chain: ATP synthase subunit b' (153 aa).

Residues 23–40 (LMAIQVVALTYILNSLFF) traverse the membrane as a helical segment.

This sequence belongs to the ATPase B chain family. In terms of assembly, F-type ATPases have 2 components, F(1) - the catalytic core - and F(0) - the membrane proton channel. F(1) has five subunits: alpha(3), beta(3), gamma(1), delta(1), epsilon(1). F(0) has four main subunits: a(1), b(1), b'(1) and c(10-14). The alpha and beta chains form an alternating ring which encloses part of the gamma chain. F(1) is attached to F(0) by a central stalk formed by the gamma and epsilon chains, while a peripheral stalk is formed by the delta, b and b' chains.

The protein resides in the cellular thylakoid membrane. Functionally, f(1)F(0) ATP synthase produces ATP from ADP in the presence of a proton or sodium gradient. F-type ATPases consist of two structural domains, F(1) containing the extramembraneous catalytic core and F(0) containing the membrane proton channel, linked together by a central stalk and a peripheral stalk. During catalysis, ATP synthesis in the catalytic domain of F(1) is coupled via a rotary mechanism of the central stalk subunits to proton translocation. Its function is as follows. Component of the F(0) channel, it forms part of the peripheral stalk, linking F(1) to F(0). The b'-subunit is a diverged and duplicated form of b found in plants and photosynthetic bacteria. The protein is ATP synthase subunit b' of Prochlorococcus marinus (strain AS9601).